The primary structure comprises 126 residues: Aspartate 1-decarboxylase (126 aa).

Catalysis depends on S25, which acts as the Schiff-base intermediate with substrate; via pyruvic acid. A Pyruvic acid (Ser) modification is found at S25. Position 57 (T57) interacts with substrate. Y58 functions as the Proton donor in the catalytic mechanism. 73–75 (GGA) lines the substrate pocket.

Belongs to the PanD family. In terms of assembly, heterooctamer of four alpha and four beta subunits. It depends on pyruvate as a cofactor. Is synthesized initially as an inactive proenzyme, which is activated by self-cleavage at a specific serine bond to produce a beta-subunit with a hydroxyl group at its C-terminus and an alpha-subunit with a pyruvoyl group at its N-terminus.

The protein resides in the cytoplasm. The catalysed reaction is L-aspartate + H(+) = beta-alanine + CO2. Its pathway is cofactor biosynthesis; (R)-pantothenate biosynthesis; beta-alanine from L-aspartate: step 1/1. Its function is as follows. Catalyzes the pyruvoyl-dependent decarboxylation of aspartate to produce beta-alanine. The chain is Aspartate 1-decarboxylase from Xanthomonas campestris pv. campestris (strain B100).